Consider the following 254-residue polypeptide: Leucyl/phenylalanyl-tRNA--protein transferase (254 aa).

The protein belongs to the L/F-transferase family.

It localises to the cytoplasm. The catalysed reaction is N-terminal L-lysyl-[protein] + L-leucyl-tRNA(Leu) = N-terminal L-leucyl-L-lysyl-[protein] + tRNA(Leu) + H(+). It catalyses the reaction N-terminal L-arginyl-[protein] + L-leucyl-tRNA(Leu) = N-terminal L-leucyl-L-arginyl-[protein] + tRNA(Leu) + H(+). It carries out the reaction L-phenylalanyl-tRNA(Phe) + an N-terminal L-alpha-aminoacyl-[protein] = an N-terminal L-phenylalanyl-L-alpha-aminoacyl-[protein] + tRNA(Phe). Functions in the N-end rule pathway of protein degradation where it conjugates Leu, Phe and, less efficiently, Met from aminoacyl-tRNAs to the N-termini of proteins containing an N-terminal arginine or lysine. The chain is Leucyl/phenylalanyl-tRNA--protein transferase from Burkholderia ambifaria (strain MC40-6).